Reading from the N-terminus, the 270-residue chain is (+)-cis,cis-nepetalactol synthase NEPS3 (270 aa).

NAD(+) contacts are provided by residues 21-27 (GGASGIG), 46-48 (DIQ), 70-71 (DV), Asn-97, 165-169 (YVMSK), and 198-202 (VATPL).

The protein belongs to the short-chain dehydrogenases/reductases (SDR) family. Forms homotetramers.

It carries out the reaction (S)-8-oxocitronellyl enol = cis-cis-nepetalactol. Functions as a non-oxidoreductive cyclase to promote the formation of cis-cis-nepetalactol. Cis-cis-nepetalactol is then oxidized by NEPS1 into cis-cis-nepetalactone, which belongs to a family of metabolites that are both insect-repellent and have euphoric effect in cats. Binds NAD(+) as classical short-chain dehydrogenase/reductase (SDR), but does not utilize it for its redox-neutral cyclase activity. The protein is (+)-cis,cis-nepetalactol synthase NEPS3 of Nepeta racemosa (Catmint).